We begin with the raw amino-acid sequence, 193 residues long: Protein hunchback (193 aa).

Disordered stretches follow at residues 16–126 (SHHH…ATTT) and 146–193 (SNDK…KYMA). The span at 17–31 (HHHHHHHAHHSHHQH) shows a compositional bias: basic residues. Composition is skewed to low complexity over residues 35–46 (SNSNSNASSPHQ) and 56–77 (SSNN…QQQQ). The segment covering 89–99 (PSPSNNDQNSR) has biased composition (polar residues). Over residues 174-193 (EPEKEHDLMSNSSEDMKYMA) the composition is skewed to basic and acidic residues.

This sequence belongs to the hunchback C2H2-type zinc-finger protein family.

The protein localises to the nucleus. Functionally, gap class segmentation protein that controls development of head structures. This is Protein hunchback (hb) from Drosophila iki (Fruit fly).